Here is a 283-residue protein sequence, read N- to C-terminus: Bifunctional protein FolD (283 aa).

Residues 163–165 (GRS), Ser-188, and Ile-229 each bind NADP(+).

Belongs to the tetrahydrofolate dehydrogenase/cyclohydrolase family. In terms of assembly, homodimer.

The catalysed reaction is (6R)-5,10-methylene-5,6,7,8-tetrahydrofolate + NADP(+) = (6R)-5,10-methenyltetrahydrofolate + NADPH. It catalyses the reaction (6R)-5,10-methenyltetrahydrofolate + H2O = (6R)-10-formyltetrahydrofolate + H(+). It participates in one-carbon metabolism; tetrahydrofolate interconversion. In terms of biological role, catalyzes the oxidation of 5,10-methylenetetrahydrofolate to 5,10-methenyltetrahydrofolate and then the hydrolysis of 5,10-methenyltetrahydrofolate to 10-formyltetrahydrofolate. The chain is Bifunctional protein FolD from Latilactobacillus sakei subsp. sakei (strain 23K) (Lactobacillus sakei subsp. sakei).